The sequence spans 107 residues: MRDIMGMMGKVKEMQSKMEKVQQEIAALEIEGRAGGGLVTVILNGKGEMRGLKIDPSLFKEDEVEILEDLIVAAHKDAKEKGEAQAQEKMADLTAGLPLPPGMKLPF.

The tract at residues 81–107 (KGEAQAQEKMADLTAGLPLPPGMKLPF) is disordered. Pro residues predominate over residues 98–107 (PLPPGMKLPF).

The protein belongs to the YbaB/EbfC family. In terms of assembly, homodimer.

It is found in the cytoplasm. Its subcellular location is the nucleoid. Binds to DNA and alters its conformation. May be involved in regulation of gene expression, nucleoid organization and DNA protection. This chain is Nucleoid-associated protein Atu0095, found in Agrobacterium fabrum (strain C58 / ATCC 33970) (Agrobacterium tumefaciens (strain C58)).